A 328-amino-acid polypeptide reads, in one-letter code: Biotin synthase (328 aa).

The 220-residue stretch at 41-260 folds into the Radical SAM core domain; it reads TAIETASLLS…VALARILMPA (220 aa). The [4Fe-4S] cluster site is built by Cys56, Cys60, and Cys63. [2Fe-2S] cluster is bound by residues Cys100, Cys131, Cys191, and Arg264.

The protein belongs to the radical SAM superfamily. Biotin synthase family. As to quaternary structure, homodimer. [4Fe-4S] cluster is required as a cofactor. The cofactor is [2Fe-2S] cluster.

It catalyses the reaction (4R,5S)-dethiobiotin + (sulfur carrier)-SH + 2 reduced [2Fe-2S]-[ferredoxin] + 2 S-adenosyl-L-methionine = (sulfur carrier)-H + biotin + 2 5'-deoxyadenosine + 2 L-methionine + 2 oxidized [2Fe-2S]-[ferredoxin]. Its pathway is cofactor biosynthesis; biotin biosynthesis; biotin from 7,8-diaminononanoate: step 2/2. Functionally, catalyzes the conversion of dethiobiotin (DTB) to biotin by the insertion of a sulfur atom into dethiobiotin via a radical-based mechanism. The sequence is that of Biotin synthase from Cereibacter sphaeroides (strain ATCC 17023 / DSM 158 / JCM 6121 / CCUG 31486 / LMG 2827 / NBRC 12203 / NCIMB 8253 / ATH 2.4.1.) (Rhodobacter sphaeroides).